The chain runs to 339 residues: Undecaprenyl-phosphate 4-deoxy-4-formamido-L-arabinose transferase (339 aa).

The next 2 membrane-spanning stretches (helical) occupy residues 235 to 255 and 269 to 289; these read LSLVGGGMALAGFLFALFLLV and LFVLFAVLFMFSGVQLLGMGL.

The protein belongs to the glycosyltransferase 2 family.

The protein localises to the cell inner membrane. The enzyme catalyses UDP-4-deoxy-4-formamido-beta-L-arabinose + di-trans,octa-cis-undecaprenyl phosphate = 4-deoxy-4-formamido-alpha-L-arabinopyranosyl di-trans,octa-cis-undecaprenyl phosphate + UDP. The protein operates within glycolipid biosynthesis; 4-amino-4-deoxy-alpha-L-arabinose undecaprenyl phosphate biosynthesis; 4-amino-4-deoxy-alpha-L-arabinose undecaprenyl phosphate from UDP-4-deoxy-4-formamido-beta-L-arabinose and undecaprenyl phosphate: step 1/2. It participates in bacterial outer membrane biogenesis; lipopolysaccharide biosynthesis. In terms of biological role, catalyzes the transfer of 4-deoxy-4-formamido-L-arabinose from UDP to undecaprenyl phosphate. The modified arabinose is attached to lipid A and is required for resistance to polymyxin and cationic antimicrobial peptides. This Pseudomonas aeruginosa (strain UCBPP-PA14) protein is Undecaprenyl-phosphate 4-deoxy-4-formamido-L-arabinose transferase.